A 367-amino-acid chain; its full sequence is Probable thylakoidal processing peptidase 2, chloroplastic (367 aa).

The transit peptide at 1–68 (MAIRVTFTYS…NTWGPSSGPR (68 aa)) directs the protein to the chloroplast. The disordered stretch occupies residues 53–72 (DKSPGSNTWGPSSGPRARPA). A compositionally biased stretch (low complexity) spans 62-72 (GPSSGPRARPA). A helical transmembrane segment spans residues 185 to 205 (EDAKAAFTAVTVSLLFRSALA). Over 206 to 367 (EPKSIPSTSM…VSQKRAVDVS (162 aa)) the chain is Lumenal, thylakoid. Residue Ser-214 is part of the active site.

It belongs to the peptidase S26 family.

Its subcellular location is the plastid. The protein resides in the chloroplast thylakoid membrane. It catalyses the reaction Cleavage of hydrophobic, N-terminal signal or leader sequences from secreted and periplasmic proteins.. In terms of biological role, cleaves the thylakoid-transfer domain from a chloroplast protein. This chain is Probable thylakoidal processing peptidase 2, chloroplastic (TPP2), found in Arabidopsis thaliana (Mouse-ear cress).